The sequence spans 373 residues: Centrosomal protein of 41 kDa (373 aa).

Positions 91–137 are disordered; that stretch reads LEDNDSATSEADAEIAAKTNGKGSPEEQSPSPVQFINSTGAGDSSRS. Residues Ser96 and Ser99 each carry the phosphoserine modification. Thr109 carries the phosphothreonine modification. Phosphoserine occurs at positions 114 and 121. Polar residues predominate over residues 116-137; the sequence is EEQSPSPVQFINSTGAGDSSRS. The 98-residue stretch at 169-266 folds into the Rhodanese domain; the sequence is PDCPFLLLDV…LAQKFPEGLV (98 aa). Residues 317–373 are disordered; that stretch reads DQGPADNPSRLNQNNSAGKDSKVAACRGGQNLPTSCPASHSSPRTLTSGHLQGKPWK. Over residues 325-334 the composition is skewed to polar residues; that stretch reads SRLNQNNSAG. The residue at position 343 (Arg343) is an Omega-N-methylarginine. A compositionally biased stretch (polar residues) spans 347 to 366; sequence NLPTSCPASHSSPRTLTSGH.

Belongs to the CEP41 family. Found in a complex with TTLL6.

It is found in the cytoplasm. The protein resides in the cytoskeleton. It localises to the microtubule organizing center. Its subcellular location is the centrosome. The protein localises to the cell projection. It is found in the cilium. The protein resides in the cilium basal body. Required during ciliogenesis for tubulin glutamylation in cilium. Probably acts by participating in the transport of TTLL6, a tubulin polyglutamylase, between the basal body and the cilium. In Mus musculus (Mouse), this protein is Centrosomal protein of 41 kDa (Cep41).